Consider the following 318-residue polypeptide: MFMINILMLIIPILLAGAFLTLVERKVLGYMQLRKGPNVVGPYGLLQPIADAIKLFIKEPLRPATSSTSMFILAPILALGLALTMWIPLPMPHPLINMNLGVLFMLAMSSLAVYSILWSGWASNSKYALIGALRAVAQTISYEVTLAIILLSVLLMSGSFTLSTLIITQEQTWLILPAWPLAMMWFISTLAETNRAPFDLTEGESELVSGFNVEYAAGPFALFFMAEYANIIMMNMFTAILFLGTSHNPHMPELYTINFIIKSLLLTMLFLWIRASYPRFRYDQLMHLLWKNFLPLTLALCMWHVSLPILTSGIPPQT.

A run of 8 helical transmembrane segments spans residues 2-22 (FMINILMLIIPILLAGAFLTL), 70-90 (MFILAPILALGLALTMWIPLP), 100-120 (LGVLFMLAMSSLAVYSILWSG), 147-167 (AIILLSVLLMSGSFTLSTLII), 172-192 (TWLILPAWPLAMMWFISTLAE), 222-242 (LFFMAEYANIIMMNMFTAILF), 253-273 (ELYTINFIIKSLLLTMLFLWI), and 294-314 (LPLTLALCMWHVSLPILTSGI).

Belongs to the complex I subunit 1 family. Core subunit of respiratory chain NADH dehydrogenase (Complex I) which is composed of 45 different subunits.

It is found in the mitochondrion inner membrane. The enzyme catalyses a ubiquinone + NADH + 5 H(+)(in) = a ubiquinol + NAD(+) + 4 H(+)(out). Its function is as follows. Core subunit of the mitochondrial membrane respiratory chain NADH dehydrogenase (Complex I) which catalyzes electron transfer from NADH through the respiratory chain, using ubiquinone as an electron acceptor. Essential for the catalytic activity and assembly of complex I. In Bos mutus grunniens (Wild yak), this protein is NADH-ubiquinone oxidoreductase chain 1 (MT-ND1).